We begin with the raw amino-acid sequence, 362 residues long: Phosphoserine aminotransferase (362 aa).

Residues serine 9 and arginine 42 each contribute to the L-glutamate site. Residues glycine 76–arginine 77, tryptophan 102, threonine 153, aspartate 174, and glutamine 197 contribute to the pyridoxal 5'-phosphate site. Lysine 198 is modified (N6-(pyridoxal phosphate)lysine). A pyridoxal 5'-phosphate-binding site is contributed by asparagine 239–threonine 240.

The protein belongs to the class-V pyridoxal-phosphate-dependent aminotransferase family. SerC subfamily. In terms of assembly, homodimer. Pyridoxal 5'-phosphate is required as a cofactor.

It localises to the cytoplasm. The catalysed reaction is O-phospho-L-serine + 2-oxoglutarate = 3-phosphooxypyruvate + L-glutamate. It catalyses the reaction 4-(phosphooxy)-L-threonine + 2-oxoglutarate = (R)-3-hydroxy-2-oxo-4-phosphooxybutanoate + L-glutamate. It participates in amino-acid biosynthesis; L-serine biosynthesis; L-serine from 3-phospho-D-glycerate: step 2/3. Its pathway is cofactor biosynthesis; pyridoxine 5'-phosphate biosynthesis; pyridoxine 5'-phosphate from D-erythrose 4-phosphate: step 3/5. Functionally, catalyzes the reversible conversion of 3-phosphohydroxypyruvate to phosphoserine and of 3-hydroxy-2-oxo-4-phosphonooxybutanoate to phosphohydroxythreonine. The protein is Phosphoserine aminotransferase of Shigella dysenteriae serotype 1 (strain Sd197).